The sequence spans 203 residues: Proteasome subunit beta 2 (203 aa).

A propeptide spans 1–9 (MGEEVSIGA) (removed in mature form; by autocatalysis). The active-site Nucleophile is Thr10.

Belongs to the peptidase T1B family. As to quaternary structure, the 20S proteasome core is composed of 14 alpha and 14 beta subunits that assemble into four stacked heptameric rings, resulting in a barrel-shaped structure. The two inner rings, each composed of seven catalytic beta subunits, are sandwiched by two outer rings, each composed of seven alpha subunits. The catalytic chamber with the active sites is on the inside of the barrel. Has a gated structure, the ends of the cylinder being occluded by the N-termini of the alpha-subunits. Is capped at one or both ends by the proteasome regulatory ATPase, PAN.

The protein localises to the cytoplasm. It catalyses the reaction Cleavage of peptide bonds with very broad specificity.. With respect to regulation, the formation of the proteasomal ATPase PAN-20S proteasome complex, via the docking of the C-termini of PAN into the intersubunit pockets in the alpha-rings, triggers opening of the gate for substrate entry. Interconversion between the open-gate and close-gate conformations leads to a dynamic regulation of the 20S proteasome proteolysis activity. In terms of biological role, component of the proteasome core, a large protease complex with broad specificity involved in protein degradation. This chain is Proteasome subunit beta 2, found in Pyrobaculum calidifontis (strain DSM 21063 / JCM 11548 / VA1).